The following is a 192-amino-acid chain: Protein GrpE (192 aa).

The segment at 1–43 (MSKEEFPHEKDLKDEVTPDKAPKKDPKAASKEEVKEDPAKDYE) is disordered.

This sequence belongs to the GrpE family. Homodimer.

The protein localises to the cytoplasm. In terms of biological role, participates actively in the response to hyperosmotic and heat shock by preventing the aggregation of stress-denatured proteins, in association with DnaK and GrpE. It is the nucleotide exchange factor for DnaK and may function as a thermosensor. Unfolded proteins bind initially to DnaJ; upon interaction with the DnaJ-bound protein, DnaK hydrolyzes its bound ATP, resulting in the formation of a stable complex. GrpE releases ADP from DnaK; ATP binding to DnaK triggers the release of the substrate protein, thus completing the reaction cycle. Several rounds of ATP-dependent interactions between DnaJ, DnaK and GrpE are required for fully efficient folding. The sequence is that of Protein GrpE from Lactobacillus gasseri (strain ATCC 33323 / DSM 20243 / BCRC 14619 / CIP 102991 / JCM 1131 / KCTC 3163 / NCIMB 11718 / NCTC 13722 / AM63).